The following is a 154-amino-acid chain: Jupiter microtubule associated homolog 1 (154 aa).

Met1 is subject to N-acetylmethionine. Positions 1-19 (MTTTTTFKGVDPNSRNSSR) are enriched in polar residues. A disordered region spans residues 1 to 154 (MTTTTTFKGV…PGGKSSLVLG (154 aa)). An N-acetylthreonine; in Hematological and neurological expressed 1 protein, N-terminally processed modification is found at Thr2. Residues Ser28 and Ser31 each carry the phosphoserine modification. The residue at position 54 (Thr54) is a Phosphothreonine. Residues Ser71, Ser87, Ser88, and Ser92 each carry the phosphoserine modification. Polar residues predominate over residues 79–91 (SPGTQRSNSSEAS). Basic and acidic residues predominate over residues 96–108 (LDLKGEGDMHENV). Residues 125-138 (PAAPVPSPVAPAPV) show a composition bias toward pro residues. Ser131 is modified (phosphoserine). At Lys148 the chain carries N6-acetyllysine.

It belongs to the JUPITER family. As to quaternary structure, interacts with the complex composed, at least, of APC, CTNNB1 and GSK3B; the interaction takes place with the inactive form of GSK3B (phosphorylated at 'Ser-9'). In terms of tissue distribution, expressed in yolk sac, fetal brain, brain, spleen and bone marrow.

Its subcellular location is the nucleus. It localises to the cytoplasm. Modulates negatively AKT-mediated GSK3B signaling. Induces CTNNB1 'Ser-33' phosphorylation and degradation through the suppression of the inhibitory 'Ser-9' phosphorylation of GSK3B, which represses the function of the APC:CTNNB1:GSK3B complex and the interaction with CDH1/E-cadherin in adherent junctions. Plays a role in the regulation of cell cycle and cell adhesion. Has an inhibitory role on AR-signaling pathway through the induction of receptor proteasomal degradation. The sequence is that of Jupiter microtubule associated homolog 1 from Mus musculus (Mouse).